The sequence spans 327 residues: Zinc transport protein ZntB (327 aa).

Topologically, residues 1–273 (MEAIKGADVN…ARRTYTMSLM (273 aa)) are cytoplasmic. Residues 274 to 294 (AMVFLPSTFLTGLFGVNLGGI) traverse the membrane as a helical segment. Over 295-300 (PGGGWR) the chain is Periplasmic. Residues 301–321 (FGFSLFCILLVVLIGGVALWL) form a helical membrane-spanning segment. Residues 322–327 (HRSKWL) are Cytoplasmic-facing.

It belongs to the CorA metal ion transporter (MIT) (TC 1.A.35) family.

It is found in the cell inner membrane. It carries out the reaction Zn(2+)(out) + H(+)(out) = Zn(2+)(in) + H(+)(in). Zinc transporter. Acts as a Zn(2+):proton symporter, which likely mediates zinc ion uptake. This chain is Zinc transport protein ZntB, found in Escherichia fergusonii (strain ATCC 35469 / DSM 13698 / CCUG 18766 / IAM 14443 / JCM 21226 / LMG 7866 / NBRC 102419 / NCTC 12128 / CDC 0568-73).